Reading from the N-terminus, the 267-residue chain is tRNA pseudouridine synthase A (267 aa).

Catalysis depends on Asp51, which acts as the Nucleophile. Residue Tyr109 participates in substrate binding.

Belongs to the tRNA pseudouridine synthase TruA family. In terms of assembly, homodimer.

It catalyses the reaction uridine(38/39/40) in tRNA = pseudouridine(38/39/40) in tRNA. Functionally, formation of pseudouridine at positions 38, 39 and 40 in the anticodon stem and loop of transfer RNAs. The chain is tRNA pseudouridine synthase A from Staphylococcus epidermidis (strain ATCC 35984 / DSM 28319 / BCRC 17069 / CCUG 31568 / BM 3577 / RP62A).